Consider the following 638-residue polypeptide: Threonine--tRNA ligase (638 aa).

The region spanning 1 to 61 (MPVITLPDGS…DADAQLQIIT (61 aa)) is the TGS domain. Residues 243–534 (DHRKIGKALN…LTEEFAGFFP (292 aa)) form a catalytic region. Zn(2+) is bound by residues Cys-334, His-385, and His-511.

It belongs to the class-II aminoacyl-tRNA synthetase family. In terms of assembly, homodimer. Requires Zn(2+) as cofactor.

It localises to the cytoplasm. It carries out the reaction tRNA(Thr) + L-threonine + ATP = L-threonyl-tRNA(Thr) + AMP + diphosphate + H(+). In terms of biological role, catalyzes the attachment of threonine to tRNA(Thr) in a two-step reaction: L-threonine is first activated by ATP to form Thr-AMP and then transferred to the acceptor end of tRNA(Thr). Also edits incorrectly charged L-seryl-tRNA(Thr). In Alteromonas mediterranea (strain DSM 17117 / CIP 110805 / LMG 28347 / Deep ecotype), this protein is Threonine--tRNA ligase.